The chain runs to 125 residues: Large ribosomal subunit protein bL12 (125 aa).

The protein belongs to the bacterial ribosomal protein bL12 family. As to quaternary structure, homodimer. Part of the ribosomal stalk of the 50S ribosomal subunit. Forms a multimeric L10(L12)X complex, where L10 forms an elongated spine to which 2 to 4 L12 dimers bind in a sequential fashion. Binds GTP-bound translation factors.

In terms of biological role, forms part of the ribosomal stalk which helps the ribosome interact with GTP-bound translation factors. Is thus essential for accurate translation. This chain is Large ribosomal subunit protein bL12, found in Chelativorans sp. (strain BNC1).